A 385-amino-acid chain; its full sequence is uncharacterized protein (385 aa).

Transmembrane regions (helical) follow at residues I17–T37, T72–L92, W107–T127, I155–I175, W191–L211, A295–L315, I326–N346, and I354–F374.

It localises to the membrane. This is an uncharacterized protein from Mycoplasma capricolum subsp. capricolum (strain California kid / ATCC 27343 / NCTC 10154).